We begin with the raw amino-acid sequence, 180 residues long: ATP-dependent protease subunit HslV (180 aa).

T5 is an active-site residue. Residues G165, C168, and T171 each coordinate Na(+).

It belongs to the peptidase T1B family. HslV subfamily. In terms of assembly, a double ring-shaped homohexamer of HslV is capped on each side by a ring-shaped HslU homohexamer. The assembly of the HslU/HslV complex is dependent on binding of ATP.

Its subcellular location is the cytoplasm. The enzyme catalyses ATP-dependent cleavage of peptide bonds with broad specificity.. Its activity is regulated as follows. Allosterically activated by HslU binding. Protease subunit of a proteasome-like degradation complex believed to be a general protein degrading machinery. The sequence is that of ATP-dependent protease subunit HslV from Helicobacter pylori (strain ATCC 700392 / 26695) (Campylobacter pylori).